Here is a 248-residue protein sequence, read N- to C-terminus: Ribonuclease PH (248 aa).

Phosphate is bound by residues arginine 86 and 124–126; that span reads GTR.

Belongs to the RNase PH family. In terms of assembly, homohexameric ring arranged as a trimer of dimers.

The enzyme catalyses tRNA(n+1) + phosphate = tRNA(n) + a ribonucleoside 5'-diphosphate. Functionally, phosphorolytic 3'-5' exoribonuclease that plays an important role in tRNA 3'-end maturation. Removes nucleotide residues following the 3'-CCA terminus of tRNAs; can also add nucleotides to the ends of RNA molecules by using nucleoside diphosphates as substrates, but this may not be physiologically important. Probably plays a role in initiation of 16S rRNA degradation (leading to ribosome degradation) during starvation. The sequence is that of Ribonuclease PH from Listeria welshimeri serovar 6b (strain ATCC 35897 / DSM 20650 / CCUG 15529 / CIP 8149 / NCTC 11857 / SLCC 5334 / V8).